We begin with the raw amino-acid sequence, 768 residues long: P-selectin (768 aa).

The signal sequence occupies residues 1–41 (MAGCPKGSWTPRLRSVILGGAQLIWFSALISELVNQKEVAA). Over 42-709 (WTYNYSTKAY…QAGTLTIQEA (668 aa)) the chain is Extracellular. Residues 58-158 (VFCRRHFTDL…PCFKRKRALC (101 aa)) form the C-type lectin domain. 21 cysteine pairs are disulfide-bonded: Cys60-Cys158, Cys131-Cys150, Cys163-Cys174, Cys168-Cys183, Cys185-Cys194, Cys200-Cys244, Cys230-Cys257, Cys262-Cys306, Cys292-Cys319, Cys324-Cys368, Cys354-Cys381, Cys386-Cys430, Cys416-Cys443, Cys448-Cys492, Cys478-Cys505, Cys510-Cys554, Cys540-Cys567, Cys580-Cys624, Cys610-Cys637, Cys642-Cys686, and Cys672-Cys699. The Ca(2+) site is built by Glu121, Asn123, and Asn124. A carbohydrate is bound at residue Asn123. 2 residues coordinate a carbohydrate: Glu133 and Asn146. Asn146 and Asp147 together coordinate Ca(2+). Residues 159–195 (YTASCQDMSCSNQGECIETIGSYTCSCYPGFYGPECE) enclose the EGF-like domain. Sushi domains lie at 198 to 259 (KECG…KCDA), 260 to 321 (VQCQ…TCEA), 322 to 383 (IACE…FCEA), 384 to 445 (LQCP…ECQA), 446 to 507 (VSCA…TCEA), 508 to 569 (IKCP…TCKG), 578 to 639 (VRCP…MCRA), and 640 to 701 (VKCS…TCQA). Asn398 carries an N-linked (GlcNAc...) asparagine glycan. The N-linked (GlcNAc...) asparagine glycan is linked to Asn603. N-linked (GlcNAc...) asparagine glycans are attached at residues Asn654, Asn661, and Asn679. Residues 710–733 (LTYLGGAVASTTGLAVGGTLLALL) traverse the membrane as a helical segment. The Cytoplasmic segment spans residues 734–768 (RKRLRKKDDGKCPLNPHSHLGTYGVFTNAAYDPTP). The S-palmitoyl cysteine; alternate moiety is linked to residue Cys745. A lipid anchor (S-stearoyl cysteine; alternate) is attached at Cys745. An Endocytosis signal motif is present at residues 756–759 (YGVF). Residues 759–768 (FTNAAYDPTP) form an interaction with SNX17 region.

Belongs to the selectin/LECAM family. As to quaternary structure, interacts with SNX17. Interacts with SELPLG/PSGL1 and PODXL2 and mediates neutrophil adhesion and leukocyte rolling. This interaction requires the sialyl-Lewis X epitope of SELPLG and PODXL2, and specific tyrosine sulfation on SELPLG. Interacts (via C-type lectin domain) with alpha-IIb/beta3 integrin ITGA2B:ITGB3 and alpha-V/beta-3 integrin ITGAV:ITGB3. Interacts with alpha5/beta1 integrin ITGA5:ITGB1 and alpha4/beta1 integrin ITGA4:ITGB. In terms of tissue distribution, stored in the alpha-granules of platelets and Weibel-Palade bodies of endothelial cells. Upon cell activation by agonists, P-selectin is transported rapidly to the cell surface.

The protein localises to the cell membrane. Its function is as follows. Ca(2+)-dependent receptor for myeloid cells that binds to carbohydrates on neutrophils and monocytes. Mediates the interaction of activated endothelial cells or platelets with leukocytes. The ligand recognized is sialyl-Lewis X. Mediates rapid rolling of leukocyte rolling over vascular surfaces during the initial steps in inflammation through interaction with SELPLG. Mediates cell-cell interactions and cell adhesion via the interaction with integrin alpha-IIb/beta3 (ITGA2B:ITGB3) and integrin alpha-V/beta-3 (ITGAV:ITGB3). The polypeptide is P-selectin (Selp) (Mus musculus (Mouse)).